Here is an 877-residue protein sequence, read N- to C-terminus: Alanine--tRNA ligase (877 aa).

The Zn(2+) site is built by H563, H567, C667, and H671.

Belongs to the class-II aminoacyl-tRNA synthetase family. Requires Zn(2+) as cofactor.

Its subcellular location is the cytoplasm. It catalyses the reaction tRNA(Ala) + L-alanine + ATP = L-alanyl-tRNA(Ala) + AMP + diphosphate. Its function is as follows. Catalyzes the attachment of alanine to tRNA(Ala) in a two-step reaction: alanine is first activated by ATP to form Ala-AMP and then transferred to the acceptor end of tRNA(Ala). Also edits incorrectly charged Ser-tRNA(Ala) and Gly-tRNA(Ala) via its editing domain. In Cytophaga hutchinsonii (strain ATCC 33406 / DSM 1761 / CIP 103989 / NBRC 15051 / NCIMB 9469 / D465), this protein is Alanine--tRNA ligase.